The sequence spans 200 residues: Holliday junction branch migration complex subunit RuvA (200 aa).

The domain I stretch occupies residues 1–64 (MITSIQGTLV…EDSQTLYGFA (64 aa)). Positions 65-144 (SPAERDFFRL…ATGAAPGLAT (80 aa)) are domain II. The flexible linker stretch occupies residues 145–151 (QPAAAAS). Residues 152–200 (PGASAHRDAVAALVALGYRSADADEAVRRASLALGEAATTESLIKKALS) form a domain III region.

Belongs to the RuvA family. As to quaternary structure, homotetramer. Forms an RuvA(8)-RuvB(12)-Holliday junction (HJ) complex. HJ DNA is sandwiched between 2 RuvA tetramers; dsDNA enters through RuvA and exits via RuvB. An RuvB hexamer assembles on each DNA strand where it exits the tetramer. Each RuvB hexamer is contacted by two RuvA subunits (via domain III) on 2 adjacent RuvB subunits; this complex drives branch migration. In the full resolvosome a probable DNA-RuvA(4)-RuvB(12)-RuvC(2) complex forms which resolves the HJ.

The protein localises to the cytoplasm. Functionally, the RuvA-RuvB-RuvC complex processes Holliday junction (HJ) DNA during genetic recombination and DNA repair, while the RuvA-RuvB complex plays an important role in the rescue of blocked DNA replication forks via replication fork reversal (RFR). RuvA specifically binds to HJ cruciform DNA, conferring on it an open structure. The RuvB hexamer acts as an ATP-dependent pump, pulling dsDNA into and through the RuvAB complex. HJ branch migration allows RuvC to scan DNA until it finds its consensus sequence, where it cleaves and resolves the cruciform DNA. This chain is Holliday junction branch migration complex subunit RuvA, found in Opitutus terrae (strain DSM 11246 / JCM 15787 / PB90-1).